The primary structure comprises 509 residues: Transcription factor SOX-9 (509 aa).

Disordered regions lie at residues 1–66 (MNLL…ESEE) and 160–271 (RLRV…IDFR). A compositionally biased stretch (low complexity) spans 27-41 (SEGSRGSPCPSGSGS). Polar residues predominate over residues 42–52 (DTENTRPQENT). Basic and acidic residues-rich tracts occupy residues 56–66 (GEPDLKKESEE) and 160–174 (RLRV…DYKY). The dimerization (DIM) stretch occupies residues 63 to 103 (ESEEDKFPVCIREAVSQVLKGYDWTLVPMPVRVNGSSKNKP). The PQA stretch occupies residues 63 to 103 (ESEEDKFPVCIREAVSQVLKGYDWTLVPMPVRVNGSSKNKP). Ser64 carries the post-translational modification Phosphoserine. The segment at residues 105 to 173 (VKRPMNAFMV…QHKKDHPDYK (69 aa)) is a DNA-binding region (HMG box). Position 211 is a phosphoserine (Ser211). The tract at residues 224-307 (PGEHSGQSQG…LPPNGHPGVP (84 aa)) is transactivation domain (TAM). 2 consecutive short sequence motifs (9aaTAD) follow at residues 275-284 (IGELSSDVIS) and 290-298 (DVNEFDQYL). Disordered stretches follow at residues 335 to 415 (WMSK…QHSP) and 420 to 439 (YSPF…TRSQ). Positions 341 to 359 (APPPPPHPPQQPPPVPQAP) are enriched in pro residues. Residues 360–369 (AQPQAALPQQ) show a composition bias toward low complexity. Residues 380-415 (HTLTTLSSEPGQSQRTHIKTEQLSPSHYSEQQQHSP) are compositionally biased toward polar residues. The tract at residues 394-509 (RTHIKTEQLS…QPVYTQLTRP (116 aa)) is transactivation domain (TAC). A Glycyl lysine isopeptide (Lys-Gly) (interchain with G-Cter in ubiquitin) cross-link involves residue Lys398. Positions 460–468 (SVLYSTFTY) match the 9aaTAD 3 motif. The segment at 479–509 (PIADTSGVPSIPQTHSPQHWEQPVYTQLTRP) is disordered. The span at 485–509 (GVPSIPQTHSPQHWEQPVYTQLTRP) shows a compositional bias: polar residues.

In terms of assembly, homodimer; homodimerization is required for activity. Interacts (via C-terminus) with ZNF219; forming a complex that binds to the COL2A1 promoter and activates COL2A1 expression. Interacts with DDRGK1. Interacts with EP300/p300. Interacts with beta-catenin (CTNNB1); inhibiting CTNNB1 activity by competing with the binding sites of TCF/LEF within CTNNB1. Post-translationally, acetylated; acetylation impairs nuclear localization and ability to transactivate expression of target genes. Deacetylated by SIRT1. In terms of processing, phosphorylation at Ser-64 and Ser-211 by PKA increases transcriptional activity and may help delay chondrocyte maturation downstream of PTHLH/PTHrP signaling. Phosphorylation at either Ser-64 or Ser-211 is required for sumoylation, but phosphorylation is not dependent on sumoylation. Phosphorylated on tyrosine residues; tyrosine dephosphorylation by PTPN11/SHP2 blocks SOX9 phosphorylation by PKA and subsequent SUMOylation. Sumoylated; phosphorylation at either Ser-64 or Ser-211 is required for sumoylation. Sumoylation is induced by BMP signaling pathway. Post-translationally, ubiquitinated; ubiquitination leads to proteasomal degradation and is negatively regulated by DDRGK1.

It is found in the nucleus. In terms of biological role, transcription factor that plays a key role in chondrocytes differentiation and skeletal development. Specifically binds the 5'-ACAAAG-3' DNA motif present in enhancers and super-enhancers and promotes expression of genes important for chondrogenesis, including cartilage matrix protein-coding genes COL2A1, COL4A2, COL9A1, COL11A2 and ACAN, SOX5 and SOX6. Also binds to some promoter regions. Plays a central role in successive steps of chondrocyte differentiation. Absolutely required for precartilaginous condensation, the first step in chondrogenesis during which skeletal progenitors differentiate into prechondrocytes. Together with SOX5 and SOX6, required for overt chondrogenesis when condensed prechondrocytes differentiate into early stage chondrocytes, the second step in chondrogenesis. Later, required to direct hypertrophic maturation and block osteoblast differentiation of growth plate chondrocytes: maintains chondrocyte columnar proliferation, delays prehypertrophy and then prevents osteoblastic differentiation of chondrocytes by lowering beta-catenin (CTNNB1) signaling and RUNX2 expression. Also required for chondrocyte hypertrophy, both indirectly, by keeping the lineage fate of chondrocytes, and directly, by remaining present in upper hypertrophic cells and transactivating COL10A1 along with MEF2C. Low lipid levels are the main nutritional determinant for chondrogenic commitment of skeletal progenitor cells: when lipids levels are low, FOXO (FOXO1 and FOXO3) transcription factors promote expression of SOX9, which induces chondrogenic commitment and suppresses fatty acid oxidation. Mechanistically, helps, but is not required, to remove epigenetic signatures of transcriptional repression and deposit active promoter and enhancer marks at chondrocyte-specific genes. Acts in cooperation with the Hedgehog pathway-dependent GLI (GLI1 and GLI3) transcription factors. In addition to cartilage development, also acts as a regulator of proliferation and differentiation in epithelial stem/progenitor cells: involved in the lung epithelium during branching morphogenesis, by balancing proliferation and differentiation and regulating the extracellular matrix. Controls epithelial branching during kidney development. The sequence is that of Transcription factor SOX-9 (SOX9) from Sus scrofa (Pig).